The sequence spans 516 residues: Cytochrome P450 1A1 (516 aa).

A mitochondrial targeting signal region spans residues 25–36 (FRPQVPKGLKSP). O-linked (GlcNAc) serine glycosylation occurs at S63. Substrate is bound at residue F220. Residue C453 coordinates heme.

It belongs to the cytochrome P450 family. As to quaternary structure, interacts with cytosolic chaperones HSP70 and HSP90; this interaction is required for initial targeting to mitochondria. Interacts (via mitochondrial targeting signal) with TOMM40 (via N-terminus); this interaction is required for translocation across the mitochondrial outer membrane. Heme is required as a cofactor. Constitutively expressed in liver.

Its subcellular location is the endoplasmic reticulum membrane. The protein localises to the mitochondrion inner membrane. It is found in the microsome membrane. It localises to the cytoplasm. The enzyme catalyses an organic molecule + reduced [NADPH--hemoprotein reductase] + O2 = an alcohol + oxidized [NADPH--hemoprotein reductase] + H2O + H(+). It carries out the reaction estrone + reduced [NADPH--hemoprotein reductase] + O2 = 2-hydroxyestrone + oxidized [NADPH--hemoprotein reductase] + H2O + H(+). It catalyses the reaction estrone + reduced [NADPH--hemoprotein reductase] + O2 = 4-hydroxyestrone + oxidized [NADPH--hemoprotein reductase] + H2O + H(+). The catalysed reaction is estrone + reduced [NADPH--hemoprotein reductase] + O2 = 6alpha-hydroxyestrone + oxidized [NADPH--hemoprotein reductase] + H2O + H(+). The enzyme catalyses estrone + reduced [NADPH--hemoprotein reductase] + O2 = 15alpha-hydroxyestrone + oxidized [NADPH--hemoprotein reductase] + H2O + H(+). It carries out the reaction estrone + reduced [NADPH--hemoprotein reductase] + O2 = 16alpha-hydroxyestrone + oxidized [NADPH--hemoprotein reductase] + H2O + H(+). It catalyses the reaction 17beta-estradiol + reduced [NADPH--hemoprotein reductase] + O2 = 2-hydroxy-17beta-estradiol + oxidized [NADPH--hemoprotein reductase] + H2O + H(+). The catalysed reaction is 17beta-estradiol + reduced [NADPH--hemoprotein reductase] + O2 = 4-hydroxy-17beta-estradiol + oxidized [NADPH--hemoprotein reductase] + H2O + H(+). The enzyme catalyses 17beta-estradiol + reduced [NADPH--hemoprotein reductase] + O2 = 6alpha-hydroxy-17beta-estradiol + oxidized [NADPH--hemoprotein reductase] + H2O + H(+). It carries out the reaction 17beta-estradiol + reduced [NADPH--hemoprotein reductase] + O2 = 7alpha-hydroxy-17beta-estradiol + oxidized [NADPH--hemoprotein reductase] + H2O + H(+). It catalyses the reaction 17beta-estradiol + reduced [NADPH--hemoprotein reductase] + O2 = 15alpha-hydroxy-17beta-estradiol + oxidized [NADPH--hemoprotein reductase] + H2O + H(+). The catalysed reaction is (5Z,8Z,11Z)-eicosatrienoate + reduced [NADPH--hemoprotein reductase] + O2 = 19-hydroxy-(5Z,8Z,11Z)-eicosatrienoate + oxidized [NADPH--hemoprotein reductase] + H2O + H(+). The enzyme catalyses (5Z,8Z,11Z,14Z)-eicosatetraenoate + reduced [NADPH--hemoprotein reductase] + O2 = 16-hydroxy-(5Z,8Z,11Z,14Z)-eicosatetraenoate + oxidized [NADPH--hemoprotein reductase] + H2O + H(+). It carries out the reaction (5Z,8Z,11Z,14Z)-eicosatetraenoate + reduced [NADPH--hemoprotein reductase] + O2 = 17-hydroxy-(5Z,8Z,11Z,14Z)-eicosatetraenoate + oxidized [NADPH--hemoprotein reductase] + H2O + H(+). It catalyses the reaction (5Z,8Z,11Z,14Z)-eicosatetraenoate + reduced [NADPH--hemoprotein reductase] + O2 = 18-hydroxy-(5Z,8Z,11Z,14Z)-eicosatetraenoate + oxidized [NADPH--hemoprotein reductase] + H2O + H(+). The catalysed reaction is (5Z,8Z,11Z,14Z)-eicosatetraenoate + reduced [NADPH--hemoprotein reductase] + O2 = 19-hydroxy-(5Z,8Z,11Z,14Z)-eicosatetraenoate + oxidized [NADPH--hemoprotein reductase] + H2O + H(+). The enzyme catalyses (5Z,8Z,11Z,14Z,17Z)-eicosapentaenoate + reduced [NADPH--hemoprotein reductase] + O2 = 19-hydroxy-(5Z,8Z,11Z,14Z,17Z)-eicosapentaenoate + oxidized [NADPH--hemoprotein reductase] + H2O + H(+). It carries out the reaction (5Z,8Z,11Z,14Z)-eicosatetraenoate + reduced [NADPH--hemoprotein reductase] + O2 = (8R,9S)-epoxy-(5Z,11Z,14Z)-eicosatrienoate + oxidized [NADPH--hemoprotein reductase] + H2O + H(+). It catalyses the reaction (5Z,8Z,11Z,14Z)-eicosatetraenoate + reduced [NADPH--hemoprotein reductase] + O2 = (11R,12S)-epoxy-(5Z,8Z,14Z)-eicosatrienoate + oxidized [NADPH--hemoprotein reductase] + H2O + H(+). The catalysed reaction is (5Z,8Z,11Z,14Z)-eicosatetraenoate + reduced [NADPH--hemoprotein reductase] + O2 = (14S,15R)-epoxy-(5Z,8Z,11Z)-eicosatrienoate + oxidized [NADPH--hemoprotein reductase] + H2O + H(+). The enzyme catalyses (5Z,8Z,11Z,14Z)-eicosatetraenoate + reduced [NADPH--hemoprotein reductase] + O2 = (14R,15S)-epoxy-(5Z,8Z,11Z)-eicosatrienoate + oxidized [NADPH--hemoprotein reductase] + H2O + H(+). It carries out the reaction (5Z,8Z,11Z,14Z,17Z)-eicosapentaenoate + reduced [NADPH--hemoprotein reductase] + O2 = (17R,18S)-epoxy-(5Z,8Z,11Z,14Z)-eicosatetraenoate + oxidized [NADPH--hemoprotein reductase] + H2O + H(+). It catalyses the reaction (4Z,7Z,10Z,13Z,16Z,19Z)-docosahexaenoate + reduced [NADPH--hemoprotein reductase] + O2 = (19S,20R)-epoxy-(4Z,7Z,10Z,13Z,16Z)-docosapentaenoate + oxidized [NADPH--hemoprotein reductase] + H2O + H(+). The catalysed reaction is (4Z,7Z,10Z,13Z,16Z,19Z)-docosahexaenoate + reduced [NADPH--hemoprotein reductase] + O2 = (19R,20S)-epoxy-(4Z,7Z,10Z,13Z,16Z)-docosapentaenoate + oxidized [NADPH--hemoprotein reductase] + H2O + H(+). The enzyme catalyses all-trans-retinol + reduced [NADPH--hemoprotein reductase] + O2 = all-trans-retinal + oxidized [NADPH--hemoprotein reductase] + 2 H2O + H(+). It carries out the reaction all-trans-retinal + reduced [NADPH--hemoprotein reductase] + O2 = all-trans-retinoate + oxidized [NADPH--hemoprotein reductase] + H2O + 2 H(+). It catalyses the reaction (13S)-hydroperoxy-(9Z,11E)-octadecadienoate = 13-oxo-(9Z,11E)-octadecadienoate + H2O. The catalysed reaction is (12S)-hydroperoxy-(5Z,8Z,10E,14Z)-eicosatetraenoate = 12-oxo-(5Z,8Z,10E,14Z)-eicosatetraenoate + H2O. The enzyme catalyses (15S)-hydroperoxy-(5Z,8Z,11Z,13E)-eicosatetraenoate = 15-oxo-(5Z,8Z,11Z,13E)-eicosatetraenoate + H2O. It carries out the reaction (5S)-hydroperoxy-(6E,8Z,11Z,14Z)-eicosatetraenoate = 5-oxo-(6E,8Z,11Z,14Z)-eicosatetraenoate + H2O. It participates in steroid hormone biosynthesis. It functions in the pathway lipid metabolism; fatty acid metabolism. The protein operates within cofactor metabolism; retinol metabolism. Its function is as follows. A cytochrome P450 monooxygenase involved in the metabolism of various endogenous substrates, including fatty acids, steroid hormones and vitamins. Mechanistically, uses molecular oxygen inserting one oxygen atom into a substrate, and reducing the second into a water molecule, with two electrons provided by NADPH via cytochrome P450 reductase (CPR; NADPH-ferrihemoprotein reductase). Catalyzes the hydroxylation of carbon-hydrogen bonds. Exhibits high catalytic activity for the formation of hydroxyestrogens from estrone (E1) and 17beta-estradiol (E2), namely 2-hydroxy E1 and E2, as well as D-ring hydroxylated E1 and E2 at the C15alpha and C16alpha positions. Displays different regioselectivities for polyunsaturated fatty acids (PUFA) hydroxylation. Catalyzes the epoxidation of double bonds of certain PUFA. Converts arachidonic acid toward epoxyeicosatrienoic acid (EET) regioisomers, 8,9-, 11,12-, and 14,15-EET, that function as lipid mediators in the vascular system. Displays an absolute stereoselectivity in the epoxidation of eicosapentaenoic acid (EPA) producing the 17(R),18(S) enantiomer. May play an important role in all-trans retinoic acid biosynthesis in extrahepatic tissues. Catalyzes two successive oxidative transformation of all-trans retinol to all-trans retinal and then to the active form all-trans retinoic acid. May also participate in eicosanoids metabolism by converting hydroperoxide species into oxo metabolites (lipoxygenase-like reaction, NADPH-independent). The chain is Cytochrome P450 1A1 (CYP1A1) from Cavia porcellus (Guinea pig).